The chain runs to 339 residues: MKEKLQQIKNTALEELNKISNKAELENIRVKYLGKKGELTQILRGMGKLSSQERPVIGKLANEVRGSIEELIEKAVTEIKLKEKEAKLKNEVIDISMPGRKQTVGRKNPLQLTLDSIMDIFISMGFSIEEGPEVEKDYYNFEALNIPKNHPARGEQDTFYINDDVVLRTQTSPIQVRTMENQKPPIKMIAPGKVYRSDSVDATHSPIFYQIEGLVIDKGITFADLKGTLELFTKKMFGEKMQTKFRPHHFPFTEPSAEMDATCFVCGGKGCNVCKNSGWIELLGCGMVHPDVLRNCGIDPEVYSGFAFGFGLDRMVMQKYELDDIRLLYESDMRFLNQF.

Glu254 provides a ligand contact to Mg(2+).

This sequence belongs to the class-II aminoacyl-tRNA synthetase family. Phe-tRNA synthetase alpha subunit type 1 subfamily. As to quaternary structure, tetramer of two alpha and two beta subunits. Requires Mg(2+) as cofactor.

It is found in the cytoplasm. The enzyme catalyses tRNA(Phe) + L-phenylalanine + ATP = L-phenylalanyl-tRNA(Phe) + AMP + diphosphate + H(+). This chain is Phenylalanine--tRNA ligase alpha subunit, found in Clostridium novyi (strain NT).